The primary structure comprises 204 residues: Dephospho-CoA kinase (204 aa).

One can recognise a DPCK domain in the interval 5-204 (VVGLTGGIGS…YLANLVKAML (200 aa)). Position 13 to 18 (13 to 18 (GSGKSA)) interacts with ATP.

This sequence belongs to the CoaE family.

It is found in the cytoplasm. The enzyme catalyses 3'-dephospho-CoA + ATP = ADP + CoA + H(+). It functions in the pathway cofactor biosynthesis; coenzyme A biosynthesis; CoA from (R)-pantothenate: step 5/5. Its function is as follows. Catalyzes the phosphorylation of the 3'-hydroxyl group of dephosphocoenzyme A to form coenzyme A. In Chromobacterium violaceum (strain ATCC 12472 / DSM 30191 / JCM 1249 / CCUG 213 / NBRC 12614 / NCIMB 9131 / NCTC 9757 / MK), this protein is Dephospho-CoA kinase.